Consider the following 291-residue polypeptide: Homoserine kinase (291 aa).

Residue R80–A90 participates in ATP binding.

This sequence belongs to the GHMP kinase family. Homoserine kinase subfamily.

Its subcellular location is the cytoplasm. The catalysed reaction is L-homoserine + ATP = O-phospho-L-homoserine + ADP + H(+). Its pathway is amino-acid biosynthesis; L-threonine biosynthesis; L-threonine from L-aspartate: step 4/5. Catalyzes the ATP-dependent phosphorylation of L-homoserine to L-homoserine phosphate. This Haloarcula marismortui (strain ATCC 43049 / DSM 3752 / JCM 8966 / VKM B-1809) (Halobacterium marismortui) protein is Homoserine kinase.